Reading from the N-terminus, the 302-residue chain is Recombination-associated protein RdgC (302 aa).

It belongs to the RdgC family.

It is found in the cytoplasm. The protein localises to the nucleoid. Functionally, may be involved in recombination. In Psychromonas ingrahamii (strain DSM 17664 / CCUG 51855 / 37), this protein is Recombination-associated protein RdgC.